The chain runs to 142 residues: Large ribosomal subunit protein uL13 (142 aa).

It belongs to the universal ribosomal protein uL13 family. As to quaternary structure, part of the 50S ribosomal subunit.

In terms of biological role, this protein is one of the early assembly proteins of the 50S ribosomal subunit, although it is not seen to bind rRNA by itself. It is important during the early stages of 50S assembly. This is Large ribosomal subunit protein uL13 from Edwardsiella ictaluri (strain 93-146).